A 21-amino-acid polypeptide reads, in one-letter code: Nitrilase (21 aa).

It belongs to the carbon-nitrogen hydrolase superfamily. Nitrilase family.

The catalysed reaction is a nitrile + 2 H2O = a carboxylate + NH4(+). Acts on many kinds of nitrile compounds such as aliphatic, aromatic, and heterocyclic mononitriles or dinitriles. Prefers S-(-)-2-(4'-isobutylphenyl)-propionitrile to R-(+)-2-(4'-isobutylphenyl)-propionitrile as the substrate. The protein is Nitrilase of Acinetobacter sp. (strain AK226).